The following is a 486-amino-acid chain: MSSESPESVDDSTKVQATAEWDPLQAVRMHLPGAETFVGIMDPEPNLFLNDFSLVDAQQEHLSLSQDLEAALPASNPIHYLHDDLANGNGMNALLSSRVNFDLSELGEDEQVNRRDKMWARLHELSPHTQIQAVLGNAEVIRHHSHSDEEVPGSNPDRWDTTSVQLEQPLTNMYFQRDQQFVTQNGVVLCSMKEDTRKPEVDIARASWEALDGDEFDVDIVADMSQVREHDVTEHVPERDDIQETEVLVEGGDFYPAGEFSLLGVSAKIPEGEAYPKHDIAEDDTEYVHRTTYAAGHRLLMDDAFGSEEVGLVRAPFEAAQAHKDDDNGEVEMDIMHLDTWFNFVDDDLVVAHKELVENTTLDVYARTHGGEKPYTLERPDVNFGEYLREKGFEIVDVYDYVDPSHPDTDMALKAITNFLTVGPRKILPVRFSDDDDGVMKQFIDGIQEDYDVTVIPDGEGRKIINLRAGYGAIHCMTTPLRRTPE.

The Amidino-cysteine intermediate role is filled by cysteine 476.

It belongs to the arginine deiminase family.

Its subcellular location is the cytoplasm. It catalyses the reaction L-arginine + H2O = L-citrulline + NH4(+). It participates in amino-acid degradation; L-arginine degradation via ADI pathway; carbamoyl phosphate from L-arginine: step 1/2. In terms of biological role, involved in the arginine deiminase pathway of fermentative arginine utilization. The protein is Arginine deiminase (arcA) of Halobacterium salinarum (strain ATCC 29341 / DSM 671 / R1).